Reading from the N-terminus, the 727-residue chain is Elongation factor 2 (727 aa).

Residues 19–260 form the tr-type G domain; that stretch reads DQIRNMGICA…MSIKHLPNPL (242 aa). Residues 28-35, 94-98, and 148-151 contribute to the GTP site; these read AHIDHGKT, DTPGH, and NKVD. Residue His603 is modified to Diphthamide.

This sequence belongs to the TRAFAC class translation factor GTPase superfamily. Classic translation factor GTPase family. EF-G/EF-2 subfamily.

The protein localises to the cytoplasm. Catalyzes the GTP-dependent ribosomal translocation step during translation elongation. During this step, the ribosome changes from the pre-translocational (PRE) to the post-translocational (POST) state as the newly formed A-site-bound peptidyl-tRNA and P-site-bound deacylated tRNA move to the P and E sites, respectively. Catalyzes the coordinated movement of the two tRNA molecules, the mRNA and conformational changes in the ribosome. The chain is Elongation factor 2 from Methanococcus maripaludis (strain C5 / ATCC BAA-1333).